The following is a 78-amino-acid chain: Small ribosomal subunit protein bS16c (78 aa).

It belongs to the bacterial ribosomal protein bS16 family.

The protein localises to the plastid. It is found in the chloroplast. In Gracilaria tenuistipitata var. liui (Red alga), this protein is Small ribosomal subunit protein bS16c.